The primary structure comprises 59 residues: Large ribosomal subunit protein bL32 (59 aa).

Residues 1–59 are disordered; it reads MAVQQNKKSPSKRGMHRSHDFLTNPPLAVEPTSGEIHLRHHVSPNGYYRGRKVLPAKGE. The segment covering 49–59 has biased composition (basic residues); it reads RGRKVLPAKGE.

This sequence belongs to the bacterial ribosomal protein bL32 family.

The protein is Large ribosomal subunit protein bL32 of Methylobacillus flagellatus (strain ATCC 51484 / DSM 6875 / VKM B-1610 / KT).